The primary structure comprises 418 residues: MRFSAVSRHHRGASIDPMTFSEATTPDALTPDAHTPRLLTCDVLYTGMGGAQSPGGVVVVGETVAAAGHPDELRRQYPHAAEERAGAVIAPPPVNAHTHLDMSAYEFQALPYFQWIPEVVIRGRHLRGVAAAQAGADTLTRLGAGGVGDIVWAPEVMDALLAREDLSGTLYFEVLNPFPDKADEVFAAARTHLERWRRLERPGLRLGLSPHTPFTVSHRLMRLLSDYAAGEGLPLQIHVAEHPTELEMFRTGGGPLWDNRMPALYPHTLAEVIGREPGPDLTPVRYLDELGVLAARPTLVHMVNVTPDDIARVARAGCAVVTCPRSNHHLECGTFDWPAFAAAGVEVALGTDSVASGETLNVREEVTFARQLYPGLDPRVLVRAAVKGGQRVVGGRTPFLRRGETWQEGFRWELSRDL.

His-97 and His-99 together coordinate Zn(2+). 2 residues coordinate substrate: Glu-173 and His-211. His-238 is a Zn(2+) binding site. Catalysis depends on Glu-241, which acts as the Proton donor. A Zn(2+)-binding site is contributed by Asp-352.

The protein belongs to the metallo-dependent hydrolases superfamily. The cofactor is Zn(2+).

The enzyme catalyses 6-amino-6-deoxyfutalosine + H2O + H(+) = futalosine + NH4(+). It functions in the pathway quinol/quinone metabolism; menaquinone biosynthesis. Catalyzes the deamination of aminodeoxyfutalosine (AFL) into futalosine (FL). To a lesser extent, can also deaminate 5'-deoxyadenosine, 5'-methylthioadenosine, 2'-deoxyadenosine, adenosine, 1-(6-amino-9H-purin-9-yl)-1-deoxy-N-ethyl-beta-D-ribofuranuronamide (NECA), and S-adenosylhomocysteine. The chain is Aminodeoxyfutalosine deaminase from Deinococcus radiodurans (strain ATCC 13939 / DSM 20539 / JCM 16871 / CCUG 27074 / LMG 4051 / NBRC 15346 / NCIMB 9279 / VKM B-1422 / R1).